The chain runs to 110 residues: MGGASKKPISTMEKRLKKEAEKQQKAEEKKKGPSKTGKEIISRAVTIDEETKKKVLDEIKKESIITPYALATKSGISISVARKILKELENQNVVKLYSKNRRLEIYIAAS.

The interval 1–37 (MGGASKKPISTMEKRLKKEAEKQQKAEEKKKGPSKTG) is disordered. Residues 12–37 (MEKRLKKEAEKQQKAEEKKKGPSKTG) are compositionally biased toward basic and acidic residues.

This sequence belongs to the eukaryotic ribosomal protein eS25 family.

This Saccharolobus solfataricus (strain ATCC 35092 / DSM 1617 / JCM 11322 / P2) (Sulfolobus solfataricus) protein is Small ribosomal subunit protein eS25 (rps25e).